Here is a 603-residue protein sequence, read N- to C-terminus: Protein SHORT-ROOT 2 (603 aa).

Disordered stretches follow at residues 11–58 (HHHH…HSHS) and 106–140 (DFSSSSSSRQFHSGTGAPSSAPVPPPPSATTSSAG). Over residues 31–44 (SYPSSRGSTSSPSS) the composition is skewed to low complexity. Residues 45 to 58 (HHTHNHTYYHHSHS) are compositionally biased toward basic residues. The span at 108–125 (SSSSSSRQFHSGTGAPSS) shows a compositional bias: low complexity. In terms of domain architecture, GRAS spans 179 to 602 (AAPSSSGRWA…QPVVWASAWK (424 aa)). The interval 186–249 (RWAAQLLMEC…LTTSGPRTLR (64 aa)) is leucine repeat I (LRI). The VHIID stretch occupies residues 268–354 (ALKFQELSPW…DTPHLSITTV (87 aa)). The short motif at 318–322 (LHILD) is the VHIID element. The tract at residues 370 to 406 (EIGQRLEKFARLMGVPFSFRAVHHSGDLADLDLAALD) is leucine repeat II (LRII). A PFYRE region spans residues 416–514 (LAVNCVNALR…ERAVGRAIVD (99 aa)). The segment at 517–602 (SCPASQSAER…QPVVWASAWK (86 aa)) is SAW.

It belongs to the GRAS family. In terms of assembly, does not interact with SCR1.

It is found in the nucleus. Its function is as follows. Putative transcription factor involved in asymmetric cell division. The chain is Protein SHORT-ROOT 2 (SHR2) from Oryza sativa subsp. japonica (Rice).